A 122-amino-acid polypeptide reads, in one-letter code: Large ribosomal subunit protein uL14 (122 aa).

It belongs to the universal ribosomal protein uL14 family. As to quaternary structure, part of the 50S ribosomal subunit. Forms a cluster with proteins L3 and L19. In the 70S ribosome, L14 and L19 interact and together make contacts with the 16S rRNA in bridges B5 and B8.

Its function is as follows. Binds to 23S rRNA. Forms part of two intersubunit bridges in the 70S ribosome. The sequence is that of Large ribosomal subunit protein uL14 from Malacoplasma penetrans (strain HF-2) (Mycoplasma penetrans).